The following is a 186-amino-acid chain: Large ribosomal subunit protein uL5 (186 aa).

The protein belongs to the universal ribosomal protein uL5 family. In terms of assembly, part of the 50S ribosomal subunit; part of the 5S rRNA/L5/L18/L25 subcomplex. Contacts the 5S rRNA and the P site tRNA. Forms a bridge to the 30S subunit in the 70S ribosome.

In terms of biological role, this is one of the proteins that bind and probably mediate the attachment of the 5S RNA into the large ribosomal subunit, where it forms part of the central protuberance. In the 70S ribosome it contacts protein S13 of the 30S subunit (bridge B1b), connecting the 2 subunits; this bridge is implicated in subunit movement. Contacts the P site tRNA; the 5S rRNA and some of its associated proteins might help stabilize positioning of ribosome-bound tRNAs. The polypeptide is Large ribosomal subunit protein uL5 (Cereibacter sphaeroides (strain ATCC 17023 / DSM 158 / JCM 6121 / CCUG 31486 / LMG 2827 / NBRC 12203 / NCIMB 8253 / ATH 2.4.1.) (Rhodobacter sphaeroides)).